Reading from the N-terminus, the 185-residue chain is Large ribosomal subunit protein bL25 (185 aa).

Belongs to the bacterial ribosomal protein bL25 family. CTC subfamily. In terms of assembly, part of the 50S ribosomal subunit; part of the 5S rRNA/L5/L18/L25 subcomplex. Contacts the 5S rRNA. Binds to the 5S rRNA independently of L5 and L18.

Functionally, this is one of the proteins that binds to the 5S RNA in the ribosome where it forms part of the central protuberance. This Laribacter hongkongensis (strain HLHK9) protein is Large ribosomal subunit protein bL25.